Here is a 399-residue protein sequence, read N- to C-terminus: Acetate kinase (399 aa).

Asn-10 is a binding site for Mg(2+). Lys-17 lines the ATP pocket. Substrate is bound at residue Arg-91. Asp-148 functions as the Proton donor/acceptor in the catalytic mechanism. ATP-binding positions include 208–212, 283–285, and 331–335; these read HLGNG, DCR, and GIGEN. Glu-385 serves as a coordination point for Mg(2+).

Belongs to the acetokinase family. As to quaternary structure, homodimer. Mg(2+) is required as a cofactor. It depends on Mn(2+) as a cofactor.

Its subcellular location is the cytoplasm. The catalysed reaction is acetate + ATP = acetyl phosphate + ADP. It participates in metabolic intermediate biosynthesis; acetyl-CoA biosynthesis; acetyl-CoA from acetate: step 1/2. Its function is as follows. Catalyzes the formation of acetyl phosphate from acetate and ATP. Can also catalyze the reverse reaction. The sequence is that of Acetate kinase from Shewanella amazonensis (strain ATCC BAA-1098 / SB2B).